The primary structure comprises 188 residues: Putative manganese efflux pump MntP (188 aa).

6 consecutive transmembrane segments (helical) span residues 3-23 (MITLFGLALALAMDAFAVALG), 39-59 (LGWHFGLFQAMMPIIGWLAGL), 65-85 (IETYDHWVAFGLLVCVGGKMI), 104-124 (GMSLIMLSVATSIDALAVGLS), 125-145 (LAIVGISVWFPALIIGIIAGV), and 167-187 (IAGGLILIGIGLKILWEHTLG).

It belongs to the MntP (TC 9.B.29) family.

The protein resides in the cell inner membrane. In terms of biological role, probably functions as a manganese efflux pump. The sequence is that of Putative manganese efflux pump MntP from Syntrophotalea carbinolica (strain DSM 2380 / NBRC 103641 / GraBd1) (Pelobacter carbinolicus).